Consider the following 271-residue polypeptide: Insulin-like growth factor-binding protein 5 (271 aa).

The first 19 residues, 1 to 19, serve as a signal peptide directing secretion; sequence MVISVVLLLLAAYAVPAQG. One can recognise an IGFBP N-terminal domain in the interval 22–102; the sequence is SFVHCEPCDE…LHGRGVCLNE (81 aa). Cystine bridges form between cysteine 26–cysteine 52, cysteine 29–cysteine 54, cysteine 37–cysteine 55, cysteine 44–cysteine 58, cysteine 66–cysteine 79, and cysteine 73–cysteine 99. Positions 109–121 are enriched in basic and acidic residues; the sequence is TKIERDSREHEEP. Residues 109–129 form a disordered region; it reads TKIERDSREHEEPTTSEMAEE. Serine 115 is subject to Phosphoserine. The 75-residue stretch at 188–262 folds into the Thyroglobulin type-1 domain; that stretch reads QGPCRRHMEA…MEYVDGDFQC (75 aa). 3 cysteine pairs are disulfide-bonded: cysteine 191-cysteine 218, cysteine 229-cysteine 240, and cysteine 242-cysteine 262.

Interacts with IGF1; this interaction enhances the growth stimulatory effects of IGF1 on fibroblasts. Interacts with CAV1; this interaction allows trafficking of IGFBP5 from the plasma membrane to the nucleus. Interacts with NCL; this interaction is necessary for IGFBP5 localization to the nucleus. Most abundant in kidney, uterus and gastrocnemius muscle.

The protein localises to the secreted. The protein resides in the cytoplasm. Its subcellular location is the nucleus. Its function is as follows. Multifunctional protein that plays a critical role in regulating the availability of IGFs to their receptors and thereby regulates IGF-mediated cellular processes including proliferation, differentiation, and apoptosis in a cell-type specific manner. Increases the cell proliferation of osteoblasts, intestinal smooth muscle cells and neuroblastoma cells. Enhances adhesion and survival of epithelial cells but decreases adhesion of mesenchymal cells. Once secreted, acts as a major mediator of mTORC1-dependent feedback inhibition of IGF1 signaling. Also plays a role in the induction of extracellular matrix (ECM) production and deposition independently of its nuclear translocation and binding to IGFs. Acts itself as a growth factor that can act independently of IGFs to regulate bone formation. Acts as a ligand for the ROR1 receptor which triggers formation of ROR1/HER2 heterodimer to enhance CREB oncogenic signaling. The chain is Insulin-like growth factor-binding protein 5 (Igfbp5) from Mus musculus (Mouse).